A 540-amino-acid chain; its full sequence is Zona pellucida sperm-binding protein 4 (540 aa).

Positions 1 to 24 are cleaved as a signal peptide; the sequence is MAPGSTMWLLGYIFLCFPVSFALI. The Extracellular segment spans residues 25–515; that stretch reads KQPKPETPTD…SGVPVHPGAL (491 aa). N-linked (GlcNAc...) asparagine glycans are attached at residues Asn76 and Asn97. Positions 145 to 187 constitute a P-type domain; sequence GLCDSVPVQDRLPCATAPISQEDCEELGCCHSSEEVNACYYGN. Residues 192–470 form the ZP domain; it reads HCTQEGHFSI…VTCPIDSRRR (279 aa). 2 N-linked (GlcNAc...) asparagine glycosylation sites follow: Asn206 and Asn223. The O-linked (GalNAc...) serine glycan is linked to Ser296. A glycan (O-linked (GalNAc...) threonine) is linked at Thr306. A disulfide bridge links Cys371 with Cys446. A propeptide spans 467-540 (removed in mature form); the sequence is SRRRNSDINF…VSYVAIRTRR (74 aa). 2 N-linked (GlcNAc...) asparagine glycosylation sites follow: Asn478 and Asn482. The helical transmembrane segment at 516–536 threads the bilayer; that stretch reads WVAGLSGIFIIGALLVSYVAI. Residues 537 to 540 lie on the Cytoplasmic side of the membrane; that stretch reads RTRR.

This sequence belongs to the ZP domain family. ZPB subfamily. In terms of processing, proteolytically cleaved before the transmembrane segment to yield the secreted ectodomain incorporated in the zona pellucida. Expressed in oocytes (at protein level).

The protein localises to the zona pellucida. The protein resides in the cell membrane. Functionally, component of the zona pellucida, an extracellular matrix surrounding oocytes which mediates sperm binding, induction of the acrosome reaction and prevents post-fertilization polyspermy. The zona pellucida is composed of 3 to 4 glycoproteins, ZP1, ZP2, ZP3, and ZP4. ZP4 may act as a sperm receptor. This Oryctolagus cuniculus (Rabbit) protein is Zona pellucida sperm-binding protein 4 (ZP4).